The chain runs to 232 residues: MKELQTVLKNHFAIEFTDKKLLETAFTHTSYANEHRLLKISHNERLEFLGDAVLQLLISEYLYKKYPKKPEGDLSKLRAMIVREESLAGFARDCQFDQFIKLGKGEEKSGGRNRDTILGDAFEAFLGALLLDKDVAKVKEFIYQVMIPKVEAGEFEMITDYKTHLQELLQVNGDVAIRYQVISETGPAHDKVFDVEVLVEGKSIGQGQGRSKKLAEQEAAKNAVEKGLDSCI.

Residues 5-134 (QTVLKNHFAI…FLGALLLDKD (130 aa)) enclose the RNase III domain. Glu47 contributes to the Mg(2+) binding site. Asp51 is a catalytic residue. 2 residues coordinate Mg(2+): Asp120 and Glu123. The active site involves Glu123. The region spanning 160–229 (DYKTHLQELL…AKNAVEKGLD (70 aa)) is the DRBM domain.

It belongs to the ribonuclease III family. In terms of assembly, homodimer. Mg(2+) is required as a cofactor.

The protein resides in the cytoplasm. It catalyses the reaction Endonucleolytic cleavage to 5'-phosphomonoester.. Functionally, digests double-stranded RNA. Involved in the processing of primary rRNA transcript to yield the immediate precursors to the large and small rRNAs (23S and 16S). Processes some mRNAs, and tRNAs when they are encoded in the rRNA operon. Processes pre-crRNA and tracrRNA of type II CRISPR loci if present in the organism. The protein is Ribonuclease 3 of Streptococcus pneumoniae (strain CGSP14).